The following is an 882-amino-acid chain: Exo-beta-D-glucosaminidase ARB_07888 (882 aa).

An N-terminal signal peptide occupies residues 1-21 (MWFVFRPAAIPALLLTLGVSA). Positions 22–31 (LSPLRPLVST) are excised as a propeptide. Residues Asn-86, Asn-200, Asn-234, Asn-237, Asn-287, and Asn-442 are each glycosylated (N-linked (GlcNAc...) asparagine). Asp-466 (proton donor) is an active-site residue. Glu-538 acts as the Nucleophile in catalysis. N-linked (GlcNAc...) asparagine glycans are attached at residues Asn-688, Asn-773, and Asn-816.

This sequence belongs to the glycosyl hydrolase 2 family. Monomer.

Its subcellular location is the secreted. The catalysed reaction is Hydrolysis of chitosan or chitosan oligosaccharides to remove successive D-glucosamine residues from the non-reducing termini.. Functionally, hydrolyzes chitosan and chitooligosaccharides with retention of anomeric configuration. The protein is Exo-beta-D-glucosaminidase ARB_07888 of Arthroderma benhamiae (strain ATCC MYA-4681 / CBS 112371) (Trichophyton mentagrophytes).